The primary structure comprises 704 residues: Ion-translocating oxidoreductase complex subunit C (704 aa).

2 consecutive 4Fe-4S ferredoxin-type domains span residues 368-397 (MGAP…QQLY) and 407-436 (KATA…VQYF). [4Fe-4S] cluster contacts are provided by C377, C380, C383, C387, C416, C419, C422, and C426. Positions 536–684 (RAKQAAHPMA…PADPRKAAVA (149 aa)) are disordered. Residues 556–565 (KAAVEAAIAR) show a composition bias toward low complexity.

This sequence belongs to the 4Fe4S bacterial-type ferredoxin family. RnfC subfamily. The complex is composed of six subunits: RsxA, RsxB, RsxC, RsxD, RsxE and RsxG. [4Fe-4S] cluster serves as cofactor.

It localises to the cell inner membrane. Part of a membrane-bound complex that couples electron transfer with translocation of ions across the membrane. Required to maintain the reduced state of SoxR. In Salmonella choleraesuis (strain SC-B67), this protein is Ion-translocating oxidoreductase complex subunit C.